The sequence spans 73 residues: Putative antitoxin VapB21 (73 aa).

The protein belongs to the UPF0330 family.

Possibly the antitoxin component of a type II toxin-antitoxin (TA) system. Its cognate toxin is VapC21 (Potential). This chain is Putative antitoxin VapB21 (vapB21), found in Sulfurisphaera tokodaii (strain DSM 16993 / JCM 10545 / NBRC 100140 / 7) (Sulfolobus tokodaii).